A 641-amino-acid polypeptide reads, in one-letter code: Fructose-1,6-bisphosphatase class 3 (641 aa).

This sequence belongs to the FBPase class 3 family. Requires Mn(2+) as cofactor.

The enzyme catalyses beta-D-fructose 1,6-bisphosphate + H2O = beta-D-fructose 6-phosphate + phosphate. It participates in carbohydrate biosynthesis; gluconeogenesis. In Latilactobacillus sakei subsp. sakei (strain 23K) (Lactobacillus sakei subsp. sakei), this protein is Fructose-1,6-bisphosphatase class 3.